Reading from the N-terminus, the 227-residue chain is Cytidylate kinase (227 aa).

12 to 20 (GPSGAGKGT) provides a ligand contact to ATP.

Belongs to the cytidylate kinase family. Type 1 subfamily.

Its subcellular location is the cytoplasm. The enzyme catalyses CMP + ATP = CDP + ADP. It catalyses the reaction dCMP + ATP = dCDP + ADP. The chain is Cytidylate kinase from Salmonella arizonae (strain ATCC BAA-731 / CDC346-86 / RSK2980).